Here is a 116-residue protein sequence, read N- to C-terminus: MTNKIILALEAEQMTKEIPAFAPGDTIVVQVKVKEGDRSRLQAFEGVVIAKRNRGVNSAFTVRKISNGVGVERTFQTYSPQIDSMAVKRRGDVRKAKLYYLRDLSGKAARIKEKLA.

This sequence belongs to the bacterial ribosomal protein bL19 family.

This protein is located at the 30S-50S ribosomal subunit interface and may play a role in the structure and function of the aminoacyl-tRNA binding site. The polypeptide is Large ribosomal subunit protein bL19 (Pseudomonas fluorescens (strain ATCC BAA-477 / NRRL B-23932 / Pf-5)).